We begin with the raw amino-acid sequence, 571 residues long: Urease subunit alpha (571 aa).

In terms of domain architecture, Urease spans 132 to 571 (GGIDAHIHFI…VALAQRYFLF (440 aa)). His137, His139, and Lys220 together coordinate Ni(2+). The residue at position 220 (Lys220) is an N6-carboxylysine. His222 contacts substrate. Residues His249 and His275 each coordinate Ni(2+). The active-site Proton donor is His323. Asp363 is a binding site for Ni(2+).

Belongs to the metallo-dependent hydrolases superfamily. Urease alpha subunit family. In terms of assembly, heterotrimer of UreA (gamma), UreB (beta) and UreC (alpha) subunits. Three heterotrimers associate to form the active enzyme. Ni cation serves as cofactor. Carboxylation allows a single lysine to coordinate two nickel ions.

The protein localises to the cytoplasm. It carries out the reaction urea + 2 H2O + H(+) = hydrogencarbonate + 2 NH4(+). The protein operates within nitrogen metabolism; urea degradation; CO(2) and NH(3) from urea (urease route): step 1/1. The sequence is that of Urease subunit alpha from Halalkalibacterium halodurans (strain ATCC BAA-125 / DSM 18197 / FERM 7344 / JCM 9153 / C-125) (Bacillus halodurans).